We begin with the raw amino-acid sequence, 572 residues long: MNLHQTVEHEAAAAFAAAGIAGSPVVLQPTKNAEHGDFQINGVMGAAKKAKQNPRELAQKVADALAGNAVIESAEVAGPGFINLRLRHEFLAQNIHAALNDARFGVAKTAQPQTVVIDYSSPNLAKEMHVGHLRSSIIGDSISRVLEFTGNTVIRQNHVGDWGTQFGMLVAYLVEQQKDNAAFELADLEQFYRAAKVRFDEDPAFADTAREYVVKLQGGDETVLALWKQFVDISLSHAQAVYDTLGLKLRPEDVAGESKYNDDLQPVADDLVQKGLAVEDDGAKVVFLDEFKNKEGEPAAFIVQKQGGGFLYASTDLACLRYRIGRLKAGRLLYVVDHRQALHFEQLFTTSRKAGYLPEDAKAEFIGFGTMMGKDGKPFKTRSGDTVKLVDLLTEAVERATALVKEKNPELGADEAAKIGKTVGIGAVKYADLSKNRTSDYVFDWDAMLSFEGNTAPYLQYAYTRVQSVFRKAGEWDATAPTVLTEPLEKQLAAELLKFENVLQSVADTAYPHYLAAYLYQAATLFSRFYEACPILKAEGASRNSRLQLAKLTGNTLKQGLDLLGIDVLDVM.

The short motif at 122–132 (PNLAKEMHVGH) is the 'HIGH' region element.

It belongs to the class-I aminoacyl-tRNA synthetase family. As to quaternary structure, monomer.

The protein localises to the cytoplasm. It catalyses the reaction tRNA(Arg) + L-arginine + ATP = L-arginyl-tRNA(Arg) + AMP + diphosphate. The sequence is that of Arginine--tRNA ligase from Neisseria gonorrhoeae (strain ATCC 700825 / FA 1090).